Here is a 104-residue protein sequence, read N- to C-terminus: MKRKGFIMTVYPDKHDEYEKRHNEIWPEMVAELKKHGAHNYSIFLDKQTNQLFGYIEIEDEEKWSKMAETSINQKWWKFMKPVMKTNSDDSPVSTDLTEVFHMD.

Residue Y18 participates in substrate binding. The active-site Proton donor is the H22. Substrate is bound by residues Y41 and 76 to 77; that span reads WW.

Belongs to the rhamnose mutarotase family. Homodimer.

The protein localises to the cytoplasm. The enzyme catalyses alpha-L-rhamnose = beta-L-rhamnose. It participates in carbohydrate metabolism; L-rhamnose metabolism. In terms of biological role, involved in the anomeric conversion of L-rhamnose. The chain is L-rhamnose mutarotase from Oceanobacillus iheyensis (strain DSM 14371 / CIP 107618 / JCM 11309 / KCTC 3954 / HTE831).